A 590-amino-acid polypeptide reads, in one-letter code: Potassium-transporting ATPase potassium-binding subunit (590 aa).

12 helical membrane-spanning segments follow: residues 3 to 23 (AFLLQLAIYLVVLLVLAKPLG), 63 to 83 (HYALAVIVVNVLGALAVYALQ), 134 to 154 (GLAVQNFLSAATGIAVVIALI), 177 to 197 (VYVLLPLSIIVSVFFVSQGVI), 284 to 304 (FVQMLAIFIIPAALCFTFGGM), 312 to 332 (WAVLAAMTVLFVVLAVFLAWA), 359 to 379 (FGIVASSLFATITTAASCGAV), 388 to 408 (ALGGFVPMFLMQLGEVVFGGV), 411 to 431 (GLYGMLVYAILAVFIAGLMIG), 451 to 471 (IAILVTPLLVLVGTAVAVVVT), 515 to 535 (LALGICMWLGRFWIIVPVLAM), and 558 to 578 (LFVVLLIGSVLLVGALTYIPA).

The protein belongs to the KdpA family. The system is composed of three essential subunits: KdpA, KdpB and KdpC.

Its subcellular location is the cell inner membrane. In terms of biological role, part of the high-affinity ATP-driven potassium transport (or Kdp) system, which catalyzes the hydrolysis of ATP coupled with the electrogenic transport of potassium into the cytoplasm. This subunit binds the periplasmic potassium ions and delivers the ions to the membrane domain of KdpB through an intramembrane tunnel. The sequence is that of Potassium-transporting ATPase potassium-binding subunit from Ralstonia pickettii (strain 12J).